The following is a 283-amino-acid chain: Bifunctional protein FolD (283 aa).

NADP(+) contacts are provided by residues 165–167 (GRS), Ser190, and Ile231.

Belongs to the tetrahydrofolate dehydrogenase/cyclohydrolase family. As to quaternary structure, homodimer.

The enzyme catalyses (6R)-5,10-methylene-5,6,7,8-tetrahydrofolate + NADP(+) = (6R)-5,10-methenyltetrahydrofolate + NADPH. The catalysed reaction is (6R)-5,10-methenyltetrahydrofolate + H2O = (6R)-10-formyltetrahydrofolate + H(+). Its pathway is one-carbon metabolism; tetrahydrofolate interconversion. Functionally, catalyzes the oxidation of 5,10-methylenetetrahydrofolate to 5,10-methenyltetrahydrofolate and then the hydrolysis of 5,10-methenyltetrahydrofolate to 10-formyltetrahydrofolate. The protein is Bifunctional protein FolD of Janthinobacterium sp. (strain Marseille) (Minibacterium massiliensis).